Here is a 1125-residue protein sequence, read N- to C-terminus: Probable phospholipid-transporting ATPase IIB (1125 aa).

Residues Met-1–Thr-131 lie on the Cytoplasmic side of the membrane. The chain crosses the membrane as a helical span at residues Phe-132 to Val-152. At Ala-153–Leu-161 the chain is on the extracellular side. The chain crosses the membrane as a helical span at residues Lys-162 to Val-182. The Cytoplasmic segment spans residues Arg-183–Lys-369. Residues Ala-370–Gly-390 form a helical membrane-spanning segment. The Extracellular portion of the chain corresponds to Pro-391–Asn-395. The helical transmembrane segment at Leu-396–Leu-415 threads the bilayer. Residues Asp-416 to Gly-928 lie on the Cytoplasmic side of the membrane. Asp-455 functions as the 4-aspartylphosphate intermediate in the catalytic mechanism. Asp-455, Lys-456, and Thr-457 together coordinate ATP. Asp-455 serves as a coordination point for Mg(2+). Thr-457 contributes to the Mg(2+) binding site. A compositionally biased stretch (low complexity) spans Gln-500–Ser-511. 2 disordered regions span residues Gln-500–Val-525 and Gly-552–Gln-574. Residues Glu-558–Ser-567 are compositionally biased toward acidic residues. Glu-580, Phe-622, Lys-627, Lys-646, Arg-675, Thr-676, Thr-755, Gly-756, Asp-757, Arg-837, and Lys-843 together coordinate ATP. Asp-863 serves as a coordination point for Mg(2+). Residues Asn-866 and Asp-867 each contribute to the ATP site. A Mg(2+)-binding site is contributed by Asp-867. The helical transmembrane segment at Met-929–Leu-949 threads the bilayer. The Extracellular segment spans residues Tyr-950 to Gln-951. The chain crosses the membrane as a helical span at residues Gly-952 to Leu-972. The Cytoplasmic portion of the chain corresponds to Asp-973–Thr-1001. Residues Phe-1002 to Val-1022 form a helical membrane-spanning segment. At Leu-1023–His-1030 the chain is on the extracellular side. Residues Val-1031–Ile-1051 form a helical membrane-spanning segment. Residues Arg-1052–His-1055 are Cytoplasmic-facing. The helical transmembrane segment at Trp-1056–Leu-1076 threads the bilayer. The Extracellular segment spans residues Asn-1077–Arg-1088. The helical transmembrane segment at Val-1089–Lys-1109 threads the bilayer. At Tyr-1110–Ser-1125 the chain is on the cytoplasmic side.

This sequence belongs to the cation transport ATPase (P-type) (TC 3.A.3) family. Type IV subfamily. Requires Mg(2+) as cofactor.

It is found in the golgi apparatus. The protein localises to the trans-Golgi network membrane. It carries out the reaction ATP + H2O + phospholipidSide 1 = ADP + phosphate + phospholipidSide 2.. The protein is Probable phospholipid-transporting ATPase IIB (atp9b) of Danio rerio (Zebrafish).